Here is a 367-residue protein sequence, read N- to C-terminus: Terpene cyclase verU1 (367 aa).

Residues 8-28 traverse the membrane as a helical segment; sequence IRCSLLLLGLVGIYTVWISSF. A glycan (N-linked (GlcNAc...) asparagine) is linked at Asn50. The next 8 membrane-spanning stretches (helical) occupy residues 57–77, 85–105, 120–140, 169–189, 197–217, 239–259, 292–312, and 327–347; these read FTGIDTLDKALGIFVVFYWPV, LSLIAFPAAVGVGEMWILFAL, MAMFGMGLMLVGPGIFLPIYC, CLLGGYYILVILLALPSPAVV, IIALLQGWPLLVSAMLWLTHL, ISAMACATISHLVPLLISLLA, FQWDYGLGSLALLLWAVGLHI, and LIPEALFLSVMMSPCGAAALY. Residue Asn352 is glycosylated (N-linked (GlcNAc...) asparagine).

Belongs to the membrane-bound ascI terpene cyclase family.

The protein localises to the membrane. Its pathway is secondary metabolite biosynthesis; terpenoid biosynthesis. It participates in mycotoxin biosynthesis. Terpene cyclase; part of the gene cluster that mediates the biosynthesis of the neurotoxin verrucosidin, a methylated alpha-pyrone polyketide that inhibits oxidative phosphorylation in mitochondria and thereby causes neurological diseases. The carbon backbone of verrucosidin is synthesized by the HR-PKS verA, and further modified by the other verrucodidin cluster enzymes. The sequence is that of Terpene cyclase verU1 from Penicillium polonicum.